The following is a 289-amino-acid chain: Ribosomal RNA small subunit methyltransferase H (289 aa).

S-adenosyl-L-methionine contacts are provided by residues 40-42 (GGH), Asp-60, Phe-84, Asp-106, and Gln-113.

Belongs to the methyltransferase superfamily. RsmH family.

The protein localises to the cytoplasm. It carries out the reaction cytidine(1402) in 16S rRNA + S-adenosyl-L-methionine = N(4)-methylcytidine(1402) in 16S rRNA + S-adenosyl-L-homocysteine + H(+). Functionally, specifically methylates the N4 position of cytidine in position 1402 (C1402) of 16S rRNA. In Haemophilus influenzae (strain PittGG), this protein is Ribosomal RNA small subunit methyltransferase H.